A 308-amino-acid chain; its full sequence is tRNA dimethylallyltransferase (308 aa).

16 to 23 (GPTASGKT) contributes to the ATP binding site. Residue 18 to 23 (TASGKT) participates in substrate binding. The interaction with substrate tRNA stretch occupies residues 41 to 44 (DSQQ).

Belongs to the IPP transferase family. In terms of assembly, monomer. Mg(2+) is required as a cofactor.

The catalysed reaction is adenosine(37) in tRNA + dimethylallyl diphosphate = N(6)-dimethylallyladenosine(37) in tRNA + diphosphate. In terms of biological role, catalyzes the transfer of a dimethylallyl group onto the adenine at position 37 in tRNAs that read codons beginning with uridine, leading to the formation of N6-(dimethylallyl)adenosine (i(6)A). The sequence is that of tRNA dimethylallyltransferase from Myxococcus xanthus (strain DK1622).